The following is a 359-amino-acid chain: 3-dehydroquinate synthase (359 aa).

Residues 71–76 (DGEAYK), 105–109 (GVIGD), 129–130 (TT), Lys-142, and Lys-151 each bind NAD(+). Residues Glu-184, His-247, and His-264 each coordinate Zn(2+).

The protein belongs to the sugar phosphate cyclases superfamily. Dehydroquinate synthase family. The cofactor is Co(2+). It depends on Zn(2+) as a cofactor. NAD(+) serves as cofactor.

It is found in the cytoplasm. It catalyses the reaction 7-phospho-2-dehydro-3-deoxy-D-arabino-heptonate = 3-dehydroquinate + phosphate. It participates in metabolic intermediate biosynthesis; chorismate biosynthesis; chorismate from D-erythrose 4-phosphate and phosphoenolpyruvate: step 2/7. Its function is as follows. Catalyzes the conversion of 3-deoxy-D-arabino-heptulosonate 7-phosphate (DAHP) to dehydroquinate (DHQ). In Burkholderia ambifaria (strain MC40-6), this protein is 3-dehydroquinate synthase.